The primary structure comprises 357 residues: 3-dehydroquinate synthase (357 aa).

NAD(+) contacts are provided by residues 104-108 (GVVGD), 128-129 (TT), Lys141, and 168-171 (FLET). Residues Glu183, His243, and His260 each contribute to the Zn(2+) site.

This sequence belongs to the sugar phosphate cyclases superfamily. Dehydroquinate synthase family. Requires Co(2+) as cofactor. The cofactor is Zn(2+). It depends on NAD(+) as a cofactor.

It is found in the cytoplasm. The catalysed reaction is 7-phospho-2-dehydro-3-deoxy-D-arabino-heptonate = 3-dehydroquinate + phosphate. It functions in the pathway metabolic intermediate biosynthesis; chorismate biosynthesis; chorismate from D-erythrose 4-phosphate and phosphoenolpyruvate: step 2/7. Its function is as follows. Catalyzes the conversion of 3-deoxy-D-arabino-heptulosonate 7-phosphate (DAHP) to dehydroquinate (DHQ). This chain is 3-dehydroquinate synthase, found in Streptococcus pyogenes serotype M49 (strain NZ131).